The primary structure comprises 436 residues: S-locus-specific glycoprotein S6 (436 aa).

The first 31 residues, 1–31 (MKGVRKPYDNSYTLSFLLVFFVLILFCPAFS), serve as a signal peptide directing secretion. Residues 34–156 (TLSSTESLRI…SNNDASEYLW (123 aa)) form the Bulb-type lectin domain. N-linked (GlcNAc...) asparagine glycosylation is found at asparagine 46, asparagine 64, asparagine 114, asparagine 121, asparagine 245, asparagine 261, and asparagine 390. Residues 351–431 (CSGDGFTRMK…HGQDLYVRLA (81 aa)) enclose the PAN domain. Disulfide bonds link cysteine 381–cysteine 406 and cysteine 389–cysteine 391.

Stigma.

Functionally, involved in sporophytic self-incompatibility system (the inability of flowering plants to achieve self-fertilization). The polypeptide is S-locus-specific glycoprotein S6 (SLSG) (Brassica oleracea (Wild cabbage)).